The primary structure comprises 144 residues: Superoxide dismutase [Mn] (144 aa).

The tract at residues 1–22 is disordered; sequence GYVNGLESAEETLAENRESGDF. Residues His-42, Asp-124, and His-128 each coordinate Mn(2+).

Belongs to the iron/manganese superoxide dismutase family. It depends on Mn(2+) as a cofactor.

The catalysed reaction is 2 superoxide + 2 H(+) = H2O2 + O2. Its function is as follows. Destroys superoxide anion radicals which are normally produced within the cells and which are toxic to biological systems. The sequence is that of Superoxide dismutase [Mn] (sod) from Haloarcula hispanica.